Consider the following 236-residue polypeptide: Ion-translocating oxidoreductase complex subunit E (236 aa).

6 helical membrane-spanning segments follow: residues 18 to 38, 39 to 59, 69 to 89, 92 to 112, 128 to 148, and 182 to 202; these read ALVQ…ATNA, LGLG…VSAL, IPIY…LINA, FGLY…CIVI, ALDG…LGAL, and PFLL…MLAF. Residues 217 to 236 are disordered; it reads RSAVGQALRGAAPTDNHEQA.

Belongs to the NqrDE/RnfAE family. As to quaternary structure, the complex is composed of six subunits: RnfA, RnfB, RnfC, RnfD, RnfE and RnfG.

It is found in the cell inner membrane. Functionally, part of a membrane-bound complex that couples electron transfer with translocation of ions across the membrane. This Edwardsiella ictaluri (strain 93-146) protein is Ion-translocating oxidoreductase complex subunit E.